A 298-amino-acid chain; its full sequence is Inosose dehydratase (298 aa).

This sequence belongs to the IolE/MocC family. It depends on glutathione as a cofactor. Co(2+) serves as cofactor. The cofactor is Mn(2+).

The enzyme catalyses scyllo-inosose = 3D-3,5/4-trihydroxycyclohexane-1,2-dione + H2O. In terms of biological role, catalyzes the dehydration of inosose (2-keto-myo-inositol, 2KMI or 2,4,6/3,5-pentahydroxycyclohexanone) to 3D-(3,5/4)-trihydroxycyclohexane-1,2-dione (D-2,3-diketo-4-deoxy-epi-inositol). The protein is Inosose dehydratase of Serratia proteamaculans (strain 568).